The following is a 2362-amino-acid chain: Filaggrin-2 (2362 aa).

The tract at residues 1 to 81 (MAYLLRSVVT…TEFILMIFKL (81 aa)) is S-100-like. 2 consecutive EF-hand domains span residues 8–43 (VVTI…EFRP) and 49–84 (DDPD…LALA). 5 residues coordinate Ca(2+): aspartate 62, aspartate 64, aspartate 66, arginine 68, and glutamate 73. Disordered regions lie at residues 96–238 (ASGS…GLSC) and 284–2109 (GCCR…SSIP). Residues 111–120 (EESETEEEEE) show a composition bias toward acidic residues. 2 stretches are compositionally biased toward basic and acidic residues: residues 159 to 174 (KRLE…EESR) and 189 to 214 (NKEK…PSRE). Filaggrin repeat units lie at residues 261–308 (GYNT…NQSC) and 373–414 (HSSC…SNGF). Composition is skewed to polar residues over residues 284-317 (GCCR…CQSG), 342-375 (SCSQ…SHSS), and 383-395 (GATQ…QQRM). Residues 396-411 (SSCGHSSSSHQKGCSS) show a composition bias toward low complexity. Composition is skewed to polar residues over residues 421 to 443 (ASGS…SSGF) and 450 to 469 (SGQS…SGYS). Low complexity-rich tracts occupy residues 474–519 (GSGQ…QSSG), 539–550 (GSRQSSGSEQHG), and 567–580 (SQSS…SGSQ). Residues 555–607 (QSSGSGKHETGPSQSSSSGHHGSGSQQHGGGSGQSTGFGEHESSSGHSSSSGQ) form a Filaggrin 3 repeat. Residues 581–590 (QHGGGSGQST) are compositionally biased toward gly residues. The span at 599-618 (SGHSSSSGQHRSGSRHSSGS) shows a compositional bias: low complexity. Over residues 632 to 653 (GHHGSGSQQHGGGSGNSTGFGE) the composition is skewed to gly residues. A compositionally biased stretch (low complexity) spans 654–675 (HGSSSHPLPSSGQNESSSGQSS). A Filaggrin 4 repeat occupies 672-723 (GQSSRSERHGTGSGQSSGFGQHGSGSHQSSSSGHNEYGSGQTSSSWPHGKGS). Positions 682–694 (TGSGQSSGFGQHG) are enriched in gly residues. Low complexity-rich tracts occupy residues 695 to 705 (SGSHQSSSSGH), 728 to 754 (GYGE…QSSS), and 780 to 798 (GYGE…WQHG). The segment covering 826 to 838 (TGSGQSLGFGQHG) has biased composition (gly residues). The segment covering 846-864 (SSGHYESVSEPSSSSWQHG) has biased composition (low complexity). Residues 880–927 (HGQSSSAWNHGNESGQSNGYGEHESGHGQSSSAWNHGNESGQSNGFGE) form a Filaggrin 5 repeat. Polar residues-rich tracts occupy residues 886-896 (AWNHGNESGQS) and 912-925 (AWNH…SNGF). The span at 973–982 (ESSEGEEHSV) shows a compositional bias: basic and acidic residues. One copy of the Filaggrin 6 repeat lies at 984–1035 (PRRYSGYGHGQGQAGHQQRESGYGQRGRPQGPSQDSSRQPQAGHGQPSQSGY). Residues 1014 to 1035 (GPSQDSSRQPQAGHGQPSQSGY) show a composition bias toward polar residues. Residues 1047–1059 (EYSEGEAHSEVSQ) are compositionally biased toward basic and acidic residues. The span at 1067-1077 (CHCHCHGQARH) shows a compositional bias: basic residues. Positions 1104–1121 (GPGQPSQSGSRRSPRSQP) are enriched in low complexity. Positions 1142–1152 (SGHGHGQGQGQ) are enriched in gly residues. The span at 1162–1174 (HGQQGRPQGPSQD) shows a compositional bias: polar residues. The stretch at 1165-1210 (QGRPQGPSQDSSRQPQAGQGQPSQSGSGRSPRRSPVHPESSEGEEH) is one Filaggrin 7 repeat. Positions 1175-1193 (SSRQPQAGQGQPSQSGSGR) are enriched in low complexity. Serine 1198, serine 1204, and serine 1205 each carry phosphoserine. Gly residues predominate over residues 1220-1232 (SGHGHGQGQGQGQ). Over residues 1255–1273 (SSRQPQAGQGQPSQSGSGR) the composition is skewed to low complexity. 3 positions are modified to phosphoserine: serine 1278, serine 1284, and serine 1285. The Filaggrin 8 repeat unit spans residues 1280-1334 (VHPESSEGEEHSVVPQRHSGSGHGHGQGQGQAGHQQRESVHGQPVRPEVPTQDSS). Residues 1300-1310 (SGHGHGQGQGQ) are compositionally biased toward gly residues. Positions 1333–1351 (SSRQPQAGQGQPSQSGSGR) are enriched in low complexity. A phosphoserine mark is found at serine 1356, serine 1362, and serine 1363. The segment covering 1377-1396 (ESCHCHCHDQAGHQQRESVH) has biased composition (basic and acidic residues). The segment covering 1413–1436 (PQAGPGQPSQSGSRRSPRSSPVHP) has biased composition (low complexity). Serine 1438 and serine 1439 each carry phosphoserine. Residues 1454 to 1464 (SGHGHGQGQGQ) show a composition bias toward gly residues. One copy of the Filaggrin 9 repeat lies at 1474-1522 (HGQRGRPQGPTQDSSRQPQAGQGQPSQSGSGRSPRRSPVHPESSEGEEH). Residues 1487–1505 (SSRQPQAGQGQPSQSGSGR) show a composition bias toward low complexity. 3 positions are modified to phosphoserine: serine 1510, serine 1516, and serine 1517. A compositionally biased stretch (gly residues) spans 1532–1544 (SGHGHGHGQGQGQ). Low complexity predominate over residues 1567–1585 (SSRQPQAGQGQPSQSGSGR). Residues serine 1590, serine 1596, and serine 1597 each carry the phosphoserine modification. 2 stretches are compositionally biased toward low complexity: residues 1643–1661 (SSRQ…GSGR) and 1683–1696 (QRHS…GQGQ). Residues 1698-1708 (HAEHQQRESVH) show a composition bias toward basic and acidic residues. The stretch at 1723–1756 (RQPQAGQGQPSLSGSGRSPRRSPVHPESSEGEEH) is one Filaggrin 10 repeat. The segment covering 1724–1739 (QPQAGQGQPSLSGSGR) has biased composition (low complexity). Phosphoserine occurs at positions 1744, 1750, 1751, 1824, 1830, and 1831. Positions 1801-1825 (SSRQPQAGQGQPSQSGSGRSPGRSP) are enriched in low complexity. Residues 1829–1848 (ESSEGEEHSVVPQRHSESGH) show a composition bias toward basic and acidic residues. The segment covering 1879–1897 (SSRQPQAGQGQPSQSGSGR) has biased composition (low complexity). Phosphoserine occurs at positions 1902, 1908, and 1909. The span at 1924 to 1934 (SGHGHGQGQGQ) shows a compositional bias: gly residues. Low complexity predominate over residues 1949 to 1975 (RPQGPSQDSSSQPQASQGQPSQSGSGR). Phosphoserine is present on residues serine 1980, serine 1986, and serine 1987. Residues 2002 to 2012 (SGHGHGQGQGQ) show a composition bias toward gly residues. The Filaggrin 11 repeat unit spans residues 2016–2070 (QQRESLHGQRGRSQSPFHPSHSIHWQSKCTISKKSSRLSGHYGRNHFQSTISGNQ). 3 stretches are compositionally biased toward polar residues: residues 2026 to 2048 (GRSQ…TISK), 2061 to 2079 (HFQS…SSRH), and 2100 to 2109 (LRSNSQSSIP). Phosphoserine is present on serine 2104. A Filaggrin 12 repeat occupies 2218–2259 (DDSQYILFQKHLESPSFGNQSGFSPNERQLYTCNESIDSYHL).

This sequence belongs to the S100-fused protein family. The protein in the N-terminal section; belongs to the S-100 family. In terms of processing, deiminated by PADI1, PADI2 or PADI3 in vitro. The deiminated form is degraded by calpain-1/CAPN1 more quickly and into shorter peptides than the intact protein. May be processed by calpain-1/CAPN1.

The protein localises to the cytoplasm. It is found in the cytoplasmic granule. Its function is as follows. Essential for normal cell-cell adhesion in the cornified cell layers. Important for proper integrity and mechanical strength of the stratum corneum of the epidermis. The polypeptide is Filaggrin-2 (Flg2) (Mus musculus (Mouse)).